Here is a 531-residue protein sequence, read N- to C-terminus: Probable rhamnogalacturonate lyase A (531 aa).

Positions 1–20 (MLSKTSLLSLLSLAAGVVNA) are cleaved as a signal peptide. 2 cysteine pairs are disulfide-bonded: C50/C93 and C184/C193.

Belongs to the polysaccharide lyase 4 family.

Its subcellular location is the secreted. The enzyme catalyses Endotype eliminative cleavage of L-alpha-rhamnopyranosyl-(1-&gt;4)-alpha-D-galactopyranosyluronic acid bonds of rhamnogalacturonan I domains in ramified hairy regions of pectin leaving L-rhamnopyranose at the reducing end and 4-deoxy-4,5-unsaturated D-galactopyranosyluronic acid at the non-reducing end.. In terms of biological role, pectinolytic enzymes consist of four classes of enzymes: pectin lyase, polygalacturonase, pectin methylesterase and rhamnogalacturonase. Degrades the rhamnogalacturonan I (RG-I) backbone of pectin. The sequence is that of Probable rhamnogalacturonate lyase A (rglA) from Aspergillus niger (strain ATCC MYA-4892 / CBS 513.88 / FGSC A1513).